A 160-amino-acid chain; its full sequence is Ribosomal RNA large subunit methyltransferase H (160 aa).

Residues leucine 77, glycine 109, and 128–133 (FSRLTF) each bind S-adenosyl-L-methionine.

It belongs to the RNA methyltransferase RlmH family. As to quaternary structure, homodimer.

The protein localises to the cytoplasm. The catalysed reaction is pseudouridine(1915) in 23S rRNA + S-adenosyl-L-methionine = N(3)-methylpseudouridine(1915) in 23S rRNA + S-adenosyl-L-homocysteine + H(+). In terms of biological role, specifically methylates the pseudouridine at position 1915 (m3Psi1915) in 23S rRNA. The sequence is that of Ribosomal RNA large subunit methyltransferase H from Desulfitobacterium hafniense (strain DSM 10664 / DCB-2).